The sequence spans 143 residues: MKALYMVFVLWVLIGCFLSSECQRGFRGQHDPTRPLSPSNPSSHFYPQPDPNRVQISQPDNIPIFMFEQPHSLNICVPPPPLYLGEEFEKLPPNTHIPYILIRPDIEPPSKYIQPVPRKKSNATPAANNFITTATAPNSTDSF.

An N-terminal signal peptide occupies residues 1–22 (MKALYMVFVLWVLIGCFLSSEC). Residues 28–50 (GQHDPTRPLSPSNPSSHFYPQPD) form a disordered region. Positions 36–45 (LSPSNPSSHF) are enriched in polar residues.

The protein resides in the secreted. Its function is as follows. May play a role in protection or detoxification. The protein is Submaxillary gland androgen-regulated protein 2, isoform gamma (Smr2) of Mus musculus (Mouse).